A 410-amino-acid chain; its full sequence is 3-phosphoshikimate 1-carboxyvinyltransferase (410 aa).

3-phosphoshikimate is bound by residues Lys-20, Ser-21, and Arg-25. Lys-20 is a phosphoenolpyruvate binding site. Residues Gly-87 and Arg-115 each contribute to the phosphoenolpyruvate site. 3-phosphoshikimate contacts are provided by Ser-157, Ser-158, Gln-159, Ser-183, Asp-293, and Lys-320. Gln-159 is a binding site for phosphoenolpyruvate. The active-site Proton acceptor is the Asp-293. Phosphoenolpyruvate contacts are provided by Arg-324, Arg-365, and Lys-391.

Belongs to the EPSP synthase family. Monomer.

The protein localises to the cytoplasm. The enzyme catalyses 3-phosphoshikimate + phosphoenolpyruvate = 5-O-(1-carboxyvinyl)-3-phosphoshikimate + phosphate. The protein operates within metabolic intermediate biosynthesis; chorismate biosynthesis. Functionally, catalyzes the transfer of the enolpyruvyl moiety of phosphoenolpyruvate (PEP) to the 5-hydroxyl of shikimate-3-phosphate (S3P) to produce enolpyruvyl shikimate-3-phosphate and inorganic phosphate. The polypeptide is 3-phosphoshikimate 1-carboxyvinyltransferase (Thermoplasma volcanium (strain ATCC 51530 / DSM 4299 / JCM 9571 / NBRC 15438 / GSS1)).